The chain runs to 395 residues: MEKISDLIECIAYEKNLPKEMISKVIQGCLLKMAQNELDPLARYLVVEENKQLQLIQLVEVLEDGDERLVNDPSKYISLSKAKEMDPSVKIKDELSYSLSLESMKQGAINRLFKDLQYQLEKALEDSHFEAFQKRLNSVLMGQVILVDHNQNTFIEIEQQFQGVLSMRHRIKGESFKVGDSIKAVLTQVKRTKKGLLLELSRTTPKMLEALLELEVPEIKDKEIEIIHCARIPGNRAKVSFFSHNARIDPIGAAVGVKGVRINAISNELNKENIDCIEYSNVPEIYITLALAPAKILSVEIKKIPIEELNAEEKESIQERFIVNNHLQKAKVRLLDIEKSKAIGKGGVNVCLASMLTGYHIEFETIPSVKENAENESEKETPKVGVEALESLFKN.

The 65-residue stretch at 137 to 201 (NSVLMGQVIL…TKKGLLLELS (65 aa)) folds into the S1 motif domain. KH domains lie at 243-291 (SHNA…TLAL) and 331-378 (KVRL…NESE).

It belongs to the NusA family. Monomer. Binds directly to the core enzyme of the DNA-dependent RNA polymerase and to nascent RNA.

It is found in the cytoplasm. Participates in both transcription termination and antitermination. In Helicobacter pylori (strain ATCC 700392 / 26695) (Campylobacter pylori), this protein is Transcription termination/antitermination protein NusA.